Reading from the N-terminus, the 451-residue chain is UDP-glycosyltransferase 76C4 (451 aa).

UDP-alpha-D-glucose-binding positions include S273, A332–Q334, H349–E357, and R371–Q374.

Belongs to the UDP-glycosyltransferase family.

This chain is UDP-glycosyltransferase 76C4 (UGT76C4), found in Arabidopsis thaliana (Mouse-ear cress).